We begin with the raw amino-acid sequence, 286 residues long: Undecaprenyl-diphosphatase (286 aa).

8 helical membrane-spanning segments follow: residues 17 to 37, 49 to 69, 98 to 118, 126 to 146, 159 to 179, 204 to 224, 232 to 252, and 261 to 281; these read VVLGIVQGLTEFLPISSTAHL, PGVAVTAVIQLGSIAAVIGYF, IAIAVGTLPVVVAGLLIKLFW, LRSVASIGIVSIVMALLLALA, VQGLDGVVVGLAQALAIIPGV, FLLGIPAITLAGLVELKGAFA, LPMLLGILSAAVVSWLAIAWL, and TWPFVIYRLVFGVVLLALVLA.

This sequence belongs to the UppP family.

Its subcellular location is the cell inner membrane. The enzyme catalyses di-trans,octa-cis-undecaprenyl diphosphate + H2O = di-trans,octa-cis-undecaprenyl phosphate + phosphate + H(+). Its function is as follows. Catalyzes the dephosphorylation of undecaprenyl diphosphate (UPP). Confers resistance to bacitracin. In Synechococcus sp. (strain RCC307), this protein is Undecaprenyl-diphosphatase.